We begin with the raw amino-acid sequence, 401 residues long: Imidazolonepropionase (401 aa).

His-70 and His-72 together coordinate Fe(3+). Residues His-70 and His-72 each coordinate Zn(2+). 4-imidazolone-5-propanoate is bound by residues Arg-79, Tyr-142, and His-175. Tyr-142 contributes to the N-formimidoyl-L-glutamate binding site. Residue His-238 coordinates Fe(3+). A Zn(2+)-binding site is contributed by His-238. 4-imidazolone-5-propanoate is bound at residue Gln-241. Asp-313 lines the Fe(3+) pocket. Asp-313 contributes to the Zn(2+) binding site. The N-formimidoyl-L-glutamate site is built by Asn-315 and Gly-317. Thr-318 lines the 4-imidazolone-5-propanoate pocket.

It belongs to the metallo-dependent hydrolases superfamily. HutI family. The cofactor is Zn(2+). Fe(3+) serves as cofactor.

The protein localises to the cytoplasm. It catalyses the reaction 4-imidazolone-5-propanoate + H2O = N-formimidoyl-L-glutamate. It functions in the pathway amino-acid degradation; L-histidine degradation into L-glutamate; N-formimidoyl-L-glutamate from L-histidine: step 3/3. Catalyzes the hydrolytic cleavage of the carbon-nitrogen bond in imidazolone-5-propanoate to yield N-formimidoyl-L-glutamate. It is the third step in the universal histidine degradation pathway. This chain is Imidazolonepropionase, found in Xanthomonas oryzae pv. oryzae (strain MAFF 311018).